Here is a 328-residue protein sequence, read N- to C-terminus: Mannitol-1-phosphate 5-dehydrogenase (328 aa).

3–14 lines the NAD(+) pocket; sequence LIHFGAGNIGCG.

Belongs to the mannitol dehydrogenase family.

It carries out the reaction D-mannitol 1-phosphate + NAD(+) = beta-D-fructose 6-phosphate + NADH + H(+). This chain is Mannitol-1-phosphate 5-dehydrogenase (mtlD), found in Mycoplasma mycoides subsp. mycoides SC (strain CCUG 32753 / NCTC 10114 / PG1).